A 2464-amino-acid polypeptide reads, in one-letter code: Highly reducing polyketide synthase xilA (2464 aa).

A Ketosynthase family 3 (KS3) domain is found at 9 to 437; the sequence is HDPIALVGIG…GTNGHCIIDH (429 aa). Catalysis depends on for beta-ketoacyl synthase activity residues Cys-182, His-318, and His-360. Residues 461–487 show a composition bias toward low complexity; the sequence is QNGINGTNGTNGTNGTNGTNGTNGTNG. The interval 461–495 is disordered; that stretch reads QNGINGTNGTNGTNGTNGTNGTNGTNGHHNPKTEA. Positions 589-911 constitute a Malonyl-CoA:ACP transacylase (MAT) domain; sequence FIFTGQGAQW…LKRNEDAQRL (323 aa). Residues 983-1121 are N-terminal hotdog fold; the sequence is HDLLGSKVPG…GQIKIEVSTF (139 aa). In terms of domain architecture, PKS/mFAS DH spans 983–1286; that stretch reads HDLLGSKVPG…FTSLNNEQES (304 aa). His-1015 functions as the Proton acceptor; for dehydratase activity in the catalytic mechanism. Positions 1133-1286 are C-terminal hotdog fold; that stretch reads GRLVDAQTWY…FTSLNNEQES (154 aa). Asp-1199 acts as the Proton donor; for dehydratase activity in catalysis. The interval 1282–1490 is methyltransferase (CMeT) domain; that stretch reads NEQESTSTGD…TEPAHHSTIT (209 aa). One can recognise an Enoyl reductase (ER) domain in the interval 1716–2028; it reads GILTSLYFKP…KGTHIGKMVI (313 aa). In terms of domain architecture, Ketoreductase (KR) spans 2052 to 2231; that stretch reads ANYILVGGMS…ATTVSLGFIN (180 aa). The 79-residue stretch at 2383 to 2461 folds into the Carrier domain; sequence ETVTFVTDAI…SIAQVIVEEA (79 aa). Ser-2420 bears the O-(pantetheine 4'-phosphoryl)serine mark.

Requires pantetheine 4'-phosphate as cofactor.

It participates in secondary metabolite biosynthesis. Its function is as follows. Highly reducing polyketide synthase; part of the gene cluster that mediates the biosynthesis of the 6-methyl-2-pyrone derivative xylariolide D. XilA produces the 5-alkyl-6-methyl-2-pyrone backbone called prexylariolide D via sequential condensations of 4 malonyl-CoA units with one acetyl-CoA starter unit. During the biosynthesis, the linear polyketide chain is branched by the addition of an acetyl unit as the origin of the methyl group at the 2-pyrone ring. Prexylariolide D is then hydroxylated at the side chain by xilC to form the final product, xylariolide D. This chain is Highly reducing polyketide synthase xilA, found in Penicillium rubens (strain ATCC 28089 / DSM 1075 / NRRL 1951 / Wisconsin 54-1255) (Penicillium chrysogenum).